Reading from the N-terminus, the 977-residue chain is Protein bric-a-brac 1 (977 aa).

The interval 1 to 97 (MASAQAETNV…RSSSVASPSS (97 aa)) is disordered. Over residues 34–43 (PKSNRSSPTQ) the composition is skewed to polar residues. Positions 44 to 69 (QEEKRIKSEDRTSPTGGAKDEDKESQ) are enriched in basic and acidic residues. Over residues 80–97 (SPVSSPQGRSSSVASPSS) the composition is skewed to low complexity. A BTB domain is found at 127–192 (VDVTLACDGR…MYRGEINVSQ (66 aa)). 4 disordered regions span residues 221–249 (AAAA…HDRE), 281–348 (ERQQ…GSTV), 362–434 (DMPS…RFPL), and 447–497 (SGLG…ADDL). Residues 316–330 (ERMELEQKERERQRD) show a composition bias toward basic and acidic residues. Over residues 372 to 396 (PLSRSSRPHSQSPQQQQAQQQGQLP) the composition is skewed to low complexity. The segment covering 469 to 491 (GGGVGGGGVGGGGAGGVGSGGGS) has biased composition (gly residues). The HTH psq-type domain occupies 559 to 611 (FRERGPLKSWRPETMAEAIFSVLKEGLSLSQAARKYDIPYPTFVLYANRVHNM). Positions 569–614 (RPETMAEAIFSVLKEGLSLSQAARKYDIPYPTFVLYANRVHNMLGP) form a DNA-binding region, H-T-H motif. The a.T hook DNA-binding region spans 621 to 632 (DLRPKGRGRPQR). 2 disordered regions span residues 772-900 (ASIS…LGDL) and 925-977 (VGAS…TTSE). 4 stretches are compositionally biased toward low complexity: residues 804 to 816 (MAVA…QQQA), 838 to 853 (QQQQ…GGHQ), 862 to 872 (ASSSSSASSSS), and 925 to 966 (VGAS…SSGG).

As to expression, leg imaginal disk at the central region of the tarsus and in eye antenna disk at the basal cylinder.

Its subcellular location is the nucleus. Probably acts as a transcriptional regulator. Required for the specification of the tarsal segment. Also involved in antenna development. The protein is Protein bric-a-brac 1 (bab1) of Drosophila melanogaster (Fruit fly).